The sequence spans 114 residues: PDZK1-interacting protein 1 (114 aa).

At M1–Q28 the chain is on the extracellular side. Residues P29–N51 traverse the membrane as a helical segment. Topologically, residues H52–M114 are cytoplasmic. S85 carries the post-translational modification Phosphoserine.

It belongs to the PDZK1-interacting protein 1/SMIM24 family. In terms of assembly, forms a heterodimer (via N-terminal transmembrane helix) with SLC5A2/SGLT2 (via TM13); this interaction enhances SLC5A2 transporter activity. Interacts with PDZK1.

It is found in the apical cell membrane. Auxiliary protein of electrogenic Na(+)-coupled sugar symporter SLC5A2/SGLT2 and SLC5A1/SGLT1. Essential for the transporter activity of SLC5A2/SGLT2 but not SLC5A1/SGLT1. This Bos taurus (Bovine) protein is PDZK1-interacting protein 1.